The primary structure comprises 422 residues: 26S proteasome non-ATPase regulatory subunit 11 (422 aa).

Ala2 carries the post-translational modification N-acetylalanine. 2 positions are modified to phosphoserine: Ser14 and Ser23. Positions 224-392 constitute a PCI domain; sequence DWKTAYSYFY…GVLIIFDEPP (169 aa). A Glycyl lysine isopeptide (Lys-Gly) (interchain with G-Cter in SUMO2) cross-link involves residue Lys274.

This sequence belongs to the proteasome subunit S9 family. In terms of assembly, component of the 19S proteasome regulatory particle complex. The 26S proteasome consists of a 20S core particle (CP) and two 19S regulatory subunits (RP). The regulatory particle is made of a lid composed of 9 subunits including PSMD11, a base containing 6 ATPases and few additional components. Phosphorylated by AMPK.

It is found in the nucleus. Its subcellular location is the cytoplasm. The protein localises to the cytosol. In terms of biological role, component of the 26S proteasome, a multiprotein complex involved in the ATP-dependent degradation of ubiquitinated proteins. This complex plays a key role in the maintenance of protein homeostasis by removing misfolded or damaged proteins, which could impair cellular functions, and by removing proteins whose functions are no longer required. Therefore, the proteasome participates in numerous cellular processes, including cell cycle progression, apoptosis, or DNA damage repair. In the complex, PSMD11 is required for proteasome assembly. Plays a key role in increased proteasome activity in embryonic stem cells (ESCs): its high expression in ESCs promotes enhanced assembly of the 26S proteasome, followed by higher proteasome activity. The protein is 26S proteasome non-ATPase regulatory subunit 11 (PSMD11) of Bos taurus (Bovine).